The chain runs to 223 residues: RNA pyrophosphohydrolase (223 aa).

Residues glycine 6–threonine 149 form the Nudix hydrolase domain. The Nudix box motif lies at glycine 38 to glycine 59. Positions glutamate 175–arginine 223 are disordered. The span at aspartate 180–glycine 193 shows a compositional bias: low complexity.

Belongs to the Nudix hydrolase family. RppH subfamily. Requires a divalent metal cation as cofactor.

Accelerates the degradation of transcripts by removing pyrophosphate from the 5'-end of triphosphorylated RNA, leading to a more labile monophosphorylated state that can stimulate subsequent ribonuclease cleavage. This chain is RNA pyrophosphohydrolase, found in Variovorax paradoxus (strain S110).